A 455-amino-acid polypeptide reads, in one-letter code: Pre-mRNA-processing factor 17 (455 aa).

The disordered stretch occupies residues 1–89; sequence MGLVDGYDTS…SQASETQKED (89 aa). Residues 18–35 are compositionally biased toward basic and acidic residues; the sequence is DEGKSVHEKKNGNLHEDT. Residues 44–63 are compositionally biased toward basic residues; that stretch reads IHKRKSHFTKSELKRRRKTR. 6 WD repeats span residues 160 to 200, 204 to 243, 291 to 330, 334 to 373, 379 to 422, and 424 to 454; these read GHPE…ECLR, GHNKPIKALRFTEDCQSFLSSSFDRSVKIWDTETGKVKTR, HHLSSILALKYFPDGSKFISSSEDKTVRIWENQINVPIKQ, TAQHSMPFLNVHPSQNYFCAQSMDNRIYSFSLKPKYKRHP, GHSS…NNIK, and PGNKPITQVDWHPQETSKVICSGAAGKIYVC.

As to quaternary structure, belongs to the CWC complex (or CEF1-associated complex), a spliceosome sub-complex reminiscent of a late-stage spliceosome composed of the U2, U5 and U6 snRNAs and at least BUD13, BUD31, BRR2, CDC40, CEF1, CLF1, CUS1, CWC2, CWC15, CWC21, CWC22, CWC23, CWC24, CWC25, CWC27, ECM2, HSH155, IST3, ISY1, LEA1, MSL1, NTC20, PRP8, PRP9, PRP11, PRP19, PRP21, PRP22, PRP45, PRP46, SLU7, SMB1, SMD1, SMD2, SMD3, SMX2, SMX3, SNT309, SNU114, SPP2, SYF1, SYF2, RSE1 and YJU2.

It localises to the nucleus. May function in the second step of pre-mRNA splicing. Regulatory protein involved in replication and mitotic spindle formation and/or maintenance. Required for initiation and completion of S-phase and for initiation and completion of DNA replication. Might be required for the maintenance of microtubules. Essential only at elevated temperatures. The sequence is that of Pre-mRNA-processing factor 17 (CDC40) from Saccharomyces cerevisiae (strain ATCC 204508 / S288c) (Baker's yeast).